A 347-amino-acid polypeptide reads, in one-letter code: GMP reductase (347 aa).

108–131 (ADFIKLSEILAMSEELNFICIDIA) serves as a coordination point for NADP(+). The K(+) site is built by G181 and G183. The Thioimidate intermediate role is filled by C186. 216 to 239 (IIGDGGCSCAGDVAKAFGGGADFV) serves as a coordination point for NADP(+).

This sequence belongs to the IMPDH/GMPR family. GuaC type 1 subfamily. Homotetramer.

It catalyses the reaction IMP + NH4(+) + NADP(+) = GMP + NADPH + 2 H(+). Catalyzes the irreversible NADPH-dependent deamination of GMP to IMP. It functions in the conversion of nucleobase, nucleoside and nucleotide derivatives of G to A nucleotides, and in maintaining the intracellular balance of A and G nucleotides. In Shewanella halifaxensis (strain HAW-EB4), this protein is GMP reductase.